Here is a 159-residue protein sequence, read N- to C-terminus: Ribosomal RNA large subunit methyltransferase H (159 aa).

Residues Leu76, Gly108, and 127–132 (FSKMTF) each bind S-adenosyl-L-methionine.

It belongs to the RNA methyltransferase RlmH family. Homodimer.

The protein localises to the cytoplasm. It carries out the reaction pseudouridine(1915) in 23S rRNA + S-adenosyl-L-methionine = N(3)-methylpseudouridine(1915) in 23S rRNA + S-adenosyl-L-homocysteine + H(+). Functionally, specifically methylates the pseudouridine at position 1915 (m3Psi1915) in 23S rRNA. In Staphylococcus saprophyticus subsp. saprophyticus (strain ATCC 15305 / DSM 20229 / NCIMB 8711 / NCTC 7292 / S-41), this protein is Ribosomal RNA large subunit methyltransferase H.